The following is a 119-amino-acid chain: Large ribosomal subunit protein uL18 (119 aa).

This sequence belongs to the universal ribosomal protein uL18 family. Part of the 50S ribosomal subunit; part of the 5S rRNA/L5/L18/L25 subcomplex. Contacts the 5S and 23S rRNAs.

Functionally, this is one of the proteins that bind and probably mediate the attachment of the 5S RNA into the large ribosomal subunit, where it forms part of the central protuberance. This Clostridium botulinum (strain ATCC 19397 / Type A) protein is Large ribosomal subunit protein uL18.